The sequence spans 437 residues: Replication factor C large subunit (437 aa).

48-55 is a binding site for ATP; it reads GPPGVGKT. Positions 410 to 437 are disordered; the sequence is TQASKPTSEEKAEKSKKYYPKRSSSRKT. A compositionally biased stretch (basic and acidic residues) spans 416–425; the sequence is TSEEKAEKSK. Residues 426 to 437 are compositionally biased toward basic residues; sequence KYYPKRSSSRKT.

This sequence belongs to the activator 1 small subunits family. RfcL subfamily. Heteromultimer composed of small subunits (RfcS) and large subunits (RfcL).

Part of the RFC clamp loader complex which loads the PCNA sliding clamp onto DNA. In Sulfolobus acidocaldarius (strain ATCC 33909 / DSM 639 / JCM 8929 / NBRC 15157 / NCIMB 11770), this protein is Replication factor C large subunit.